Consider the following 340-residue polypeptide: Alcohol dehydrogenase patD (340 aa).

Residue C46 participates in Zn(2+) binding. NAD(+) is bound at residue H47. Residues H67, E68, C101, C104, C112, and C154 each coordinate Zn(2+). H67 contributes to the substrate binding site. NAD(+) is bound by residues 178 to 183 (GLGGLG), 198 to 203 (VALSRD), K206, 265 to 267 (LSI), 289 to 291 (PSG), and 297 to 299 (EDA).

The protein belongs to the zinc-containing alcohol dehydrogenase family. It depends on Zn(2+) as a cofactor.

The protein resides in the cytoplasm. The protein localises to the cytosol. It catalyses the reaction neopatulin + NADPH + H(+) = (E)-ascladiol + NADP(+). The protein operates within mycotoxin biosynthesis; patulin biosynthesis. In terms of biological role, alcohol dehydrogenase; part of the gene cluster that mediates the biosynthesis of patulin, an acetate-derived tetraketide mycotoxin produced by several fungal species that shows antimicrobial properties against several bacteria. PatD catalyzes the conversion of neopatulin into E-ascladiol. The pathway begins with the synthesis of 6-methylsalicylic acid by the polyketide synthase (PKS) patK via condensation of acetate and malonate units. The 6-methylsalicylic acid decarboxylase patG then catalyzes the decarboxylation of 6-methylsalicylic acid to yield m-cresol (also known as 3-methylphenol). These first reactions occur in the cytosol. The intermediate m-cresol is then transported into the endoplasmic reticulum where the cytochrome P450 monooxygenase patH converts it to m-hydroxybenzyl alcohol, which is further converted to gentisyl alcohol by the cytochrome P450 monooxygenase patI. The oxidoreductases patJ and patO further convert gentisyl alcohol to isoepoxydon in the vacuole. PatN catalyzes then the transformation of isoepoxydon into phyllostine. The cluster protein patF is responsible for the conversion from phyllostine to neopatulin whereas the alcohol dehydrogenase patD converts neopatulin to E-ascladiol. The steps between isoepoxydon and E-ascladiol occur in the cytosol, and E-ascladiol is probably secreted to the extracellular space by one of the cluster-specific transporters patC or patM. Finally, the secreted patulin synthase patE catalyzes the conversion of E-ascladiol to patulin. The protein is Alcohol dehydrogenase patD of Penicillium expansum (Blue mold rot fungus).